Consider the following 1023-residue polypeptide: DNA polymerase (1023 aa).

A disordered region spans residues 726–751 (QTDATRKHRQCTPTSNSSSDEDAPFY).

It belongs to the DNA polymerase type-B family. In terms of assembly, heterodimer with the terminal protein; this heterodimer binds to bp 9 to 18 of the genome. Forms a complex with viral pTP, DBP and hosts NFIA and POU2F1/OCT1 for initiation of replication.

The protein localises to the host nucleus. It carries out the reaction DNA(n) + a 2'-deoxyribonucleoside 5'-triphosphate = DNA(n+1) + diphosphate. Functionally, eukaryotic-type DNA polymerase involved in viral genomic replication. DNA synthesis is protein primed, and acts in a strand displacement replication. Assembles in complex with viral pTP, DBP, host NFIA and host POU2F1/OCT1 on viral origin of replication. The polymerase covalently transfers dCMP onto pTP, thereby initiating complementary strand synthesis. This Bovine adenovirus B serotype 3 (BAdV-3) protein is DNA polymerase.